We begin with the raw amino-acid sequence, 744 residues long: Catalase-peroxidase (744 aa).

Positions 108–231 form a cross-link, tryptophyl-tyrosyl-methioninium (Trp-Tyr) (with M-257); sequence WHSAGTYRIS…LAAVQMGLIY (124 aa). The active-site Proton acceptor is the histidine 109. Positions 231–257 form a cross-link, tryptophyl-tyrosyl-methioninium (Tyr-Met) (with W-108); the sequence is YVNPEGPNGNPDPIAAARDIRETFRRM. Histidine 272 contributes to the heme b binding site. The segment at 353–372 is disordered; it reads ANQWKPKDGAGAGTVPDAHD.

This sequence belongs to the peroxidase family. Peroxidase/catalase subfamily. Homodimer or homotetramer. Requires heme b as cofactor. Post-translationally, formation of the three residue Trp-Tyr-Met cross-link is important for the catalase, but not the peroxidase activity of the enzyme.

It catalyses the reaction H2O2 + AH2 = A + 2 H2O. The enzyme catalyses 2 H2O2 = O2 + 2 H2O. Functionally, bifunctional enzyme with both catalase and broad-spectrum peroxidase activity. In Frankia casuarinae (strain DSM 45818 / CECT 9043 / HFP020203 / CcI3), this protein is Catalase-peroxidase.